The primary structure comprises 601 residues: DNA topoisomerase I, mitochondrial (601 aa).

The transit peptide at M1–G50 directs the protein to the mitochondrion. A disordered region spans residues R22–E48. 3 interaction with DNA regions span residues K261–Y262, R324–K329, and T421–K423. Positions C268–F601 constitute a Topo IB-type catalytic domain. Y559 functions as the O-(3'-phospho-DNA)-tyrosine intermediate in the catalytic mechanism.

It belongs to the type IB topoisomerase family. The cofactor is Ca(2+). Mg(2+) is required as a cofactor.

It is found in the mitochondrion. It carries out the reaction ATP-independent breakage of single-stranded DNA, followed by passage and rejoining.. In terms of biological role, releases the supercoiling and torsional tension of DNA introduced during duplication of mitochondrial DNA by transiently cleaving and rejoining one strand of the DNA duplex. Introduces a single-strand break via transesterification at a target site in duplex DNA. The scissile phosphodiester is attacked by the catalytic tyrosine of the enzyme, resulting in the formation of a DNA-(3'-phosphotyrosyl)-enzyme intermediate and the expulsion of a 5'-OH DNA strand. The free DNA strand then rotates around the intact phosphodiester bond on the opposing strand, thus removing DNA supercoils. Finally, in the religation step, the DNA 5'-OH attacks the covalent intermediate to expel the active-site tyrosine and restore the DNA phosphodiester backbone. The chain is DNA topoisomerase I, mitochondrial (TOP1MT) from Pan troglodytes (Chimpanzee).